The chain runs to 52 residues: Alpha-crystallin B chain (52 aa).

This sequence belongs to the small heat shock protein (HSP20) family. Homodimer. Aggregates with homologous proteins, including alpha-A-crystallin and the small heat shock protein HSPB1, to form large heteromeric complexes.

Its function is as follows. May contribute to the transparency and refractive index of the lens. The polypeptide is Alpha-crystallin B chain (CRYAB) (Turdus merula (Common blackbird)).